We begin with the raw amino-acid sequence, 802 residues long: Osmosensitive cation channel TMEM63C (802 aa).

The Extracellular portion of the chain corresponds to 1–35 (MSAFPDSMDQKFHNMTVNECFQSRSTVLQGQPFGG). The chain crosses the membrane as a helical span at residues 36–60 (IPTVLVLNIILWVFVVLLYSFLRKA). Residues 61–124 (AWDYGRLALL…RDRDLINKCG (64 aa)) lie on the Cytoplasmic side of the membrane. Ser-75 and Ser-78 each carry phosphoserine. A helical membrane pass occupies residues 125-157 (DDARIYITFQYHLIIFVLILCIPSLGIILPVNY). Over 158 to 180 (IGTVLDWNSHFGRTTIVNVSTES) the chain is Extracellular. The helical transmembrane segment at 181-205 (KFLWLHSLFAFLYFLINLAFMGHHC) threads the bilayer. Topologically, residues 206–401 (LGFVPKKSLH…IIWKHLSIRR (196 aa)) are cytoplasmic. The chain crosses the membrane as a helical span at residues 402-431 (FSWWTRFIAINTFLFFLFFFLTTPAIIINT). Residues 432–446 (IDIYNVTRPIEKLQS) are Extracellular-facing. Residues 447-476 (PIVTQFFPSVLLWAFTVTMPLLVYLSAFLE) traverse the membrane as a helical segment. Residues 477 to 480 (AHWT) are Cytoplasmic-facing. Residues 481–517 (RSSQNLIIVHKCYIFLVFMVVILPSMGLTSLHVFLRW) form a helical membrane-spanning segment. Over 518-540 (LFDIYYLEHATIRFQCVFLPDNG) the chain is Extracellular. A helical transmembrane segment spans residues 541 to 573 (AFFINYVITAALLGTGMELMRLGSLCTYCTRLF). Residues 574–593 (LSKSEPERVHIRKNQATDFQ) are Cytoplasmic-facing. The chain crosses the membrane as a helical span at residues 594-612 (FGREYAWMLNVFSVVMAYS). The Extracellular segment spans residues 613–615 (ITC). Residues 616-640 (PIIVPFGLLYLCMKHITDRYNMYYS) traverse the membrane as a helical segment. Residues 641 to 647 (YAPTKLN) are Cytoplasmic-facing. Residues 648–676 (AQIHMAAVYQAIFAPLLGLFWMLFFSILR) traverse the membrane as a helical segment. At 677–681 (VGSLH) the chain is on the extracellular side. The helical transmembrane segment at 682 to 702 (SITLFSMSSLIISVVIAFSGV) threads the bilayer. Residues 703–802 (FLGKLRIAQR…EGLEMEGQSH (100 aa)) lie on the Cytoplasmic side of the membrane. The tract at residues 753-785 (TPASSPARHTYGTINSQPEEGEEESGLRGFARE) is disordered.

It belongs to the CSC1 (TC 1.A.17) family. As to quaternary structure, monomer.

Its subcellular location is the endoplasmic reticulum membrane. It localises to the cell membrane. The catalysed reaction is Ca(2+)(in) = Ca(2+)(out). Functionally, acts as an osmosensitive cation channel preferentially activated upon hypotonic stress. In contrast to TMEM63B, does not show phospholipid scramblase activity. Enriched in mitochondria-ER contact sites where it may regulate the metabolite flux and organelles' morphologies in response to osmotic changes. In particular may regulate mitochondrial motility and function in motor neuron axons. Required for the functional integrity of the kidney glomerular filtration barrier. This chain is Osmosensitive cation channel TMEM63C, found in Mus musculus (Mouse).